The following is a 984-amino-acid chain: Mediator of RNA polymerase II transcription subunit 5 (984 aa).

This sequence belongs to the Mediator complex subunit 5 family. Component of the Mediator complex.

Its subcellular location is the nucleus. Its function is as follows. Component of the Mediator complex, a coactivator involved in the regulated transcription of nearly all RNA polymerase II-dependent genes. Mediator functions as a bridge to convey information from gene-specific regulatory proteins to the basal RNA polymerase II transcription machinery. Mediator is recruited to promoters by direct interactions with regulatory proteins and serves as a scaffold for the assembly of a functional preinitiation complex with RNA polymerase II and the general transcription factors. The chain is Mediator of RNA polymerase II transcription subunit 5 (NUT1) from Phaeosphaeria nodorum (strain SN15 / ATCC MYA-4574 / FGSC 10173) (Glume blotch fungus).